A 150-amino-acid chain; its full sequence is Dynein light chain Tctex-type protein 2B (150 aa).

This sequence belongs to the dynein light chain Tctex-type family.

It localises to the dynein axonemal particle. Its function is as follows. Acts as one of several non-catalytic accessory components of the cytoplasmic dynein 2 complex (dynein-2 complex), a motor protein complex that drives the movement of cargos along microtubules within cilia and flagella in concert with the intraflagellar transport (IFT) system. Required for proper retrograde ciliary transport. This is Dynein light chain Tctex-type protein 2B (dynlt2b) from Danio rerio (Zebrafish).